The sequence spans 427 residues: 3-phosphoshikimate 1-carboxyvinyltransferase (427 aa).

3-phosphoshikimate-binding residues include Lys-20, Ser-21, and Arg-25. Lys-20 contributes to the phosphoenolpyruvate binding site. Residues Gly-92 and Arg-120 each coordinate phosphoenolpyruvate. Positions 166, 168, 312, and 339 each coordinate 3-phosphoshikimate. Gln-168 provides a ligand contact to phosphoenolpyruvate. Catalysis depends on Asp-312, which acts as the Proton acceptor. Phosphoenolpyruvate-binding residues include Arg-343 and Arg-385.

It belongs to the EPSP synthase family. In terms of assembly, monomer.

It is found in the cytoplasm. It catalyses the reaction 3-phosphoshikimate + phosphoenolpyruvate = 5-O-(1-carboxyvinyl)-3-phosphoshikimate + phosphate. Its pathway is metabolic intermediate biosynthesis; chorismate biosynthesis; chorismate from D-erythrose 4-phosphate and phosphoenolpyruvate: step 6/7. Functionally, catalyzes the transfer of the enolpyruvyl moiety of phosphoenolpyruvate (PEP) to the 5-hydroxyl of shikimate-3-phosphate (S3P) to produce enolpyruvyl shikimate-3-phosphate and inorganic phosphate. The sequence is that of 3-phosphoshikimate 1-carboxyvinyltransferase from Streptococcus pyogenes serotype M4 (strain MGAS10750).